The primary structure comprises 256 residues: tRNA pseudouridine synthase A (256 aa).

Aspartate 43 functions as the Nucleophile in the catalytic mechanism. Tyrosine 94 contributes to the substrate binding site.

Belongs to the tRNA pseudouridine synthase TruA family.

The catalysed reaction is uridine(38/39/40) in tRNA = pseudouridine(38/39/40) in tRNA. Functionally, formation of pseudouridine at positions 38, 39 and 40 in the anticodon stem and loop of transfer RNAs. This is tRNA pseudouridine synthase A from Pyrobaculum aerophilum (strain ATCC 51768 / DSM 7523 / JCM 9630 / CIP 104966 / NBRC 100827 / IM2).